Reading from the N-terminus, the 345-residue chain is uncharacterized protein (345 aa).

The span at 1–13 shows a compositional bias: polar residues; it reads MSKPNTETISVNI. The segment at 1–23 is disordered; the sequence is MSKPNTETISVNIPESEGVPLPD. The stretch at 283-316 forms a coiled coil; it reads SLKQRTNILKKQGETLKKNVEDINKDTSNLKRHA.

The protein localises to the virion. This is an uncharacterized protein from Acanthamoeba polyphaga mimivirus (APMV).